We begin with the raw amino-acid sequence, 2013 residues long: Cell adhesion molecule DSCAM (2013 aa).

A signal peptide spans 1–17; sequence MWILALSLFQSFANVFS. The Extracellular portion of the chain corresponds to 18–1594; sequence EEPHSSLYFV…EGLTTNEGLK (1577 aa). Ig-like C2-type domains are found at residues 20-119, 125-216, 225-305, 313-401, 407-500, 504-592, 596-685, 690-783, and 787-883; these read PHSS…VHIK, PYTV…ARLF, PSIL…AKVI, PLKA…VQVV, PKII…ARIN, PASI…VHVT, PPFI…SQLI, PKFV…MYLT, and PAMI…LTVQ. 9 disulfide bridges follow: C46–C102, C145–C197, C246–C293, C335–C385, C428–C484, C525–C575, C617–C669, C711–C766, and C809–C865. A glycan (N-linked (GlcNAc...) asparagine) is linked at N78. N470 is a glycosylation site (N-linked (GlcNAc...) asparagine). N666 is a glycosylation site (N-linked (GlcNAc...) asparagine). Fibronectin type-III domains lie at 885 to 982, 987 to 1086, 1091 to 1187, and 1191 to 1285; these read PPDP…ADEA, PPQE…TLED, PPEN…TKED, and PPAG…AKAP. N-linked (GlcNAc...) asparagine glycosylation is found at N1160 and N1250. In terms of domain architecture, Ig-like C2-type 10 spans 1285–1377; sequence PARILTFSGT…DEIILNLQVQ (93 aa). A disulfide bond links C1307 and C1359. 2 consecutive Fibronectin type-III domains span residues 1379–1473 and 1474–1575; these read PPDQ…TLGK and EPQF…TIPP. Residues 1595 to 1615 form a helical membrane-spanning segment; sequence ILVTISCILVGVLLLFVLLLV. Residues 1616 to 2013 lie on the Cytoplasmic side of the membrane; it reads VRRRRREQRL…NPYAKSYTLV (398 aa). The segment at 1616–2013 is required for netrin-mediated axon repulsion of neuronal growth cones; that stretch reads VRRRRREQRL…NPYAKSYTLV (398 aa). Disordered regions lie at residues 1718–1809 and 1920–2013; these read LVDV…SASS and RDLS…YTLV. The span at 1799 to 1809 shows a compositional bias: low complexity; the sequence is SSMVSTESASS. A compositionally biased stretch (polar residues) spans 1949-1968; the sequence is EASSSTSSTREGQQSWQQGA.

Homodimer; mediates homophilic interactions to promote cell adhesion. Interacts with DCC; the interaction is abolished in response to NTN1. Interacts (via extracellular domain) with NTN1. Interacts (via extracellular domain) with UNC5C (via Ig-like C2-type domain). Interacts with PTK2. Interacts with FYN. Post-translationally, phosphorylated at tyrosine residues. Phosphorylation is enhanced by NTN1. In terms of tissue distribution, expressed in cortical and cerebellar neurons, in cells of the external and internal granular layer and of the Purkinje cell layer (at protein level). In the retina, expressed in dopaminergic and Nos1-positive amacrine cells and most retinal ganglion cells (at protein level). Expressed in the brain with highest levels in the cortex, olfactory bulb, hippocampus, thalamus, cerebellum and spinal cord. Expressed in the retinal ganglion layer (RGL).

The protein localises to the cell membrane. It localises to the cell projection. It is found in the axon. The protein resides in the synapse. Its subcellular location is the dendrite. The protein localises to the growth cone. Functionally, cell adhesion molecule that plays a role in neuronal self-avoidance. Promotes repulsion between specific neuronal processes of either the same cell or the same subtype of cells. Mediates within retinal amacrine and ganglion cell subtypes both isoneuronal self-avoidance for creating an orderly dendritic arborization and heteroneuronal self-avoidance to maintain the mosaic spacing between amacrine and ganglion cell bodies. Receptor for netrin required for axon guidance independently of and in collaboration with the receptor DCC. Might also collaborate with UNC5C in NTN1-mediated axon repulsion independently of DCC. In spinal cord development plays a role in guiding commissural axons projection and pathfinding across the ventral midline to reach the floor plate upon ligand binding. Mediates intracellular signaling by stimulating the activation of MAPK8 and MAP kinase p38. Adhesion molecule that promotes lamina-specific synaptic connections in the retina: expressed in specific subsets of interneurons and retinal ganglion cells (RGCs) and promotes synaptic connectivity via homophilic interactions. The polypeptide is Cell adhesion molecule DSCAM (Dscam) (Mus musculus (Mouse)).